Reading from the N-terminus, the 344-residue chain is Methionine import ATP-binding protein MetN 1 (344 aa).

Residues 2-241 enclose the ABC transporter domain; the sequence is IELRNLSQRF…PHHEVTRALI (240 aa). Residue 38-45 participates in ATP binding; sequence GRSGAGKS.

The protein belongs to the ABC transporter superfamily. Methionine importer (TC 3.A.1.24) family. As to quaternary structure, the complex is composed of two ATP-binding proteins (MetN), two transmembrane proteins (MetI) and a solute-binding protein (MetQ).

It localises to the cell inner membrane. The enzyme catalyses L-methionine(out) + ATP + H2O = L-methionine(in) + ADP + phosphate + H(+). It carries out the reaction D-methionine(out) + ATP + H2O = D-methionine(in) + ADP + phosphate + H(+). Functionally, part of the ABC transporter complex MetNIQ involved in methionine import. Responsible for energy coupling to the transport system. This chain is Methionine import ATP-binding protein MetN 1, found in Burkholderia ambifaria (strain ATCC BAA-244 / DSM 16087 / CCUG 44356 / LMG 19182 / AMMD) (Burkholderia cepacia (strain AMMD)).